The following is a 67-amino-acid chain: MAFAWKKNFSYSKYASICSQTVRQALKPEIKNEVKTHGDAEFLYTRWKNGAQEKTESYNSAKSADKE.

The protein belongs to the eukaryotic ATPase epsilon family. In terms of assembly, F-type ATPases have 2 components, CF(1) - the catalytic core - and CF(0) - the membrane proton channel. CF(1) has five subunits: alpha(3), beta(3), gamma(1), delta(1), epsilon(1). CF(0) seems to have nine subunits: a, b, c, d, e, f, g, F6 and 8 (or A6L).

It is found in the mitochondrion. It localises to the mitochondrion inner membrane. Its function is as follows. Mitochondrial membrane ATP synthase (F(1)F(0) ATP synthase or Complex V) produces ATP from ADP in the presence of a proton gradient across the membrane which is generated by electron transport complexes of the respiratory chain. F-type ATPases consist of two structural domains, F(1) - containing the extramembraneous catalytic core, and F(0) - containing the membrane proton channel, linked together by a central stalk and a peripheral stalk. During catalysis, ATP synthesis in the catalytic domain of F(1) is coupled via a rotary mechanism of the central stalk subunits to proton translocation. Part of the complex F(1) domain and of the central stalk which is part of the complex rotary element. Rotation of the central stalk against the surrounding alpha(3)beta(3) subunits leads to hydrolysis of ATP in three separate catalytic sites on the beta subunits. The chain is Putative ATP synthase subunit epsilon, mitochondrial (atp15) from Schizosaccharomyces pombe (strain 972 / ATCC 24843) (Fission yeast).